The sequence spans 111 residues: Large ribosomal subunit protein P2B (111 aa).

A disordered region spans residues 62–111; that stretch reads LASVPSGGAAAGGASASTGAAAGGAAEAEEEKEEEAKEESDDDMGFGLFD. Residues 67 to 87 show a composition bias toward low complexity; that stretch reads SGGAAAGGASASTGAAAGGAA. A compositionally biased stretch (acidic residues) spans 88 to 105; the sequence is EAEEEKEEEAKEESDDDM. At Ser101 the chain carries Phosphoserine.

Belongs to the eukaryotic ribosomal protein P1/P2 family.

Plays an important role in the elongation step of protein synthesis. This chain is Large ribosomal subunit protein P2B (RPP2B), found in Candida albicans (Yeast).